The sequence spans 863 residues: NACHT, LRR and PYD domains-containing protein 4B (863 aa).

The Pyrin domain maps to 1 to 93; that stretch reads MASLFSDFGF…TNRATGEIAA (93 aa). One can recognise an NACHT domain in the interval 143–466; the sequence is KMVVLQGVAG…FYLLHSEMDH (324 aa). Residue 149-156 participates in ATP binding; the sequence is GVAGIGKT. LRR repeat units follow at residues 618 to 643, 683 to 706, 717 to 740, 741 to 763, 765 to 782, 797 to 824, and 843 to 863; these read WHQI…IFNE, SYNL…MLCD, ILDL…LRQN, KSLR…ALCR, LTLP…ACQL, YKCL…AMKD, and SQEF…ENGV.

Belongs to the NLRP family.

Its function is as follows. May be involved in inflammation and recognition of cytosolic pathogen-associated molecular patterns (PAMPs) not intercepted by membrane-bound receptors. This chain is NACHT, LRR and PYD domains-containing protein 4B (Nlrp4b), found in Mus musculus (Mouse).